The following is a 404-amino-acid chain: Sulfate adenylyltransferase (404 aa).

It belongs to the sulfate adenylyltransferase family.

It carries out the reaction sulfate + ATP + H(+) = adenosine 5'-phosphosulfate + diphosphate. It participates in sulfur metabolism; hydrogen sulfide biosynthesis; sulfite from sulfate: step 1/3. The sequence is that of Sulfate adenylyltransferase from Chlorobium chlorochromatii (strain CaD3).